The sequence spans 237 residues: Ribonuclease PH (237 aa).

Phosphate is bound by residues arginine 86 and 124–126 (GTR).

Belongs to the RNase PH family. As to quaternary structure, homohexameric ring arranged as a trimer of dimers.

The catalysed reaction is tRNA(n+1) + phosphate = tRNA(n) + a ribonucleoside 5'-diphosphate. Functionally, phosphorolytic 3'-5' exoribonuclease that plays an important role in tRNA 3'-end maturation. Removes nucleotide residues following the 3'-CCA terminus of tRNAs; can also add nucleotides to the ends of RNA molecules by using nucleoside diphosphates as substrates, but this may not be physiologically important. Probably plays a role in initiation of 16S rRNA degradation (leading to ribosome degradation) during starvation. This chain is Ribonuclease PH, found in Idiomarina loihiensis (strain ATCC BAA-735 / DSM 15497 / L2-TR).